The sequence spans 259 residues: UPF0246 protein VSAL_I2547 (259 aa).

It belongs to the UPF0246 family.

This chain is UPF0246 protein VSAL_I2547, found in Aliivibrio salmonicida (strain LFI1238) (Vibrio salmonicida (strain LFI1238)).